The following is a 737-amino-acid chain: Death domain-associated protein 6 (737 aa).

Residues Met1–Gly55 form a disordered region. The segment at Met1–Pro159 is necessary for interaction with USP7 and ATRX. Ser25 is modified (phosphoserine). Low complexity predominate over residues Ser33–His45. A Glycyl lysine isopeptide (Lys-Gly) (interchain with G-Cter in SUMO2) cross-link involves residue Lys142. Residues Leu145–Arg184 are disordered. Polar residues predominate over residues Ala149–Ser175. Residues Arg179–Asp216 adopt a coiled-coil conformation. Residues Gly182–Glu417 are interaction with histone H3.3. A Phosphoserine modification is found at Ser212. A necessary for interaction with USP7 region spans residues Gly346–Glu567. A disordered region spans residues Gln382 to Glu556. The Nuclear localization signal signature appears at Arg390–Arg394. 2 positions are modified to phosphoserine: Ser412 and Ser424. Residues Met422–Lys432 are compositionally biased toward polar residues. The stretch at Lys432–Gln474 forms a coiled coil. A compositionally biased stretch (acidic residues) spans Thr435–Gln489. A Phosphothreonine modification is found at Thr459. 2 positions are modified to phosphoserine: Ser494 and Ser497. Position 511 is an N6-acetyllysine (Lys511). Positions Met517–Val527 are enriched in polar residues. The segment covering Ser528–Glu547 has biased composition (low complexity). A phosphoserine mark is found at Ser558 and Ser578. Residues Glu569–Met719 form a disordered region. Over residues Pro579–Glu592 the composition is skewed to basic and acidic residues. The interaction with SPOP stretch occupies residues Cys624–Asp737. The Nuclear localization signal motif lies at Pro626–Lys632. Glycyl lysine isopeptide (Lys-Gly) (interchain with G-Cter in SUMO1) cross-links involve residues Lys628 and Lys629. The span at Glu647–Gly657 shows a compositional bias: basic and acidic residues. Phosphoserine is present on residues Ser665, Ser668, Ser685, Ser699, Ser734, and Ser736. A compositionally biased stretch (polar residues) spans Asp678–Arg713. The segment at Ile730–Asp737 is sumo interaction motif (SIM).

The protein belongs to the DAXX family. In terms of assembly, homomultimer. Interacts (via C-terminus) with TNFRSF6 (via death domain). Interacts with PAX5, SLC2A4/GLUT4, MAP3K5, TGFBR2, phosphorylated dimeric HSPB1/HSP27, CENPC, ETS1, sumoylated PML, UBE2I, MCRS1 and TP53. Interacts (via N-terminus) with HIPK2 and HIPK3. Interacts with HIPK1, which induces translocation from PML/POD/ND10 nuclear bodies to chromatin and enhances association with HDAC1. Interacts (non-phosphorylated) with PAX3, PAX7, DEK, HDAC1, HDAC2, HDAC3, acetylated histone H4 and histones H2A, H2B, H3, H3.3 and H4. Interacts with SPOP; mediating CUL3-dependent proteasomal degradation. Interacts with CBP; the interaction is dependent the sumoylation of CBP and suppresses CBP transcriptional activity via recruitment of HDAC2 directly in the complex with TP53 and HIPK2. Interacts with AXIN1; the interaction stimulates the interaction of DAXX with TP53, stimulates 'Ser-46' phosphorylation of TP53 on and induces cell death on UV irradiation. Interacts with MDM2; the interaction is direct. Interacts with USP7; the interaction is direct and independent of MDM2 and TP53. Part of a complex with DAXX, MDM2 and USP7 under non-stress conditions. Interacts (via N-terminus) with RASSF1 (via C-terminus); the interaction is independent of MDM2 and TP53; RASSF1 isoform A disrupts interactions among MDM2, DAXX and USP7, thus contributing to the efficient activation of TP53 by promoting MDM2 self-ubiquitination in cell-cycle checkpoint control in response to DNA damage. Interacts with ATRX to form the chromatin remodeling complex ATRX:DAXX. Interacts with HSF1 (via homotrimeric form preferentially); this interaction relieves homotrimeric HSF1 from repression of its transcriptional activity by HSP90-dependent multichaperone complex upon heat shock. In terms of processing, sumoylated with SUMO1 on multiple lysine residues. Polyubiquitinated; which is promoted by CUL3 and SPOP and results in proteasomal degradation. Ubiquitinated by MDM2; inducing its degradation. Deubiquitinated by USP7; leading to stabilize it.

It is found in the cytoplasm. It localises to the nucleus. The protein localises to the nucleoplasm. Its subcellular location is the PML body. The protein resides in the nucleolus. It is found in the chromosome. It localises to the centromere. Its function is as follows. Transcription corepressor known to repress transcriptional potential of several sumoylated transcription factors. Down-regulates basal and activated transcription. Its transcription repressor activity is modulated by recruiting it to subnuclear compartments like the nucleolus or PML/POD/ND10 nuclear bodies through interactions with MCSR1 and PML, respectively. Seems to regulate transcription in PML/POD/ND10 nuclear bodies together with PML and may influence TNFRSF6-dependent apoptosis thereby. Inhibits transcriptional activation of PAX3 and ETS1 through direct protein-protein interactions. Modulates PAX5 activity; the function seems to involve CREBBP. Acts as an adapter protein in a MDM2-DAXX-USP7 complex by regulating the RING-finger E3 ligase MDM2 ubiquitination activity. Under non-stress condition, in association with the deubiquitinating USP7, prevents MDM2 self-ubiquitination and enhances the intrinsic E3 ligase activity of MDM2 towards TP53, thereby promoting TP53 ubiquitination and subsequent proteasomal degradation. Upon DNA damage, its association with MDM2 and USP7 is disrupted, resulting in increased MDM2 autoubiquitination and consequently, MDM2 degradation, which leads to TP53 stabilization. Acts as a histone chaperone that facilitates deposition of histone H3.3. Acts as a targeting component of the chromatin remodeling complex ATRX:DAXX which has ATP-dependent DNA translocase activity and catalyzes the replication-independent deposition of histone H3.3 in pericentric DNA repeats outside S-phase and telomeres, and the in vitro remodeling of H3.3-containing nucleosomes. Does not affect the ATPase activity of ATRX but alleviates its transcription repression activity. Upon neuronal activation associates with regulatory elements of selected immediate early genes where it promotes deposition of histone H3.3 which may be linked to transcriptional induction of these genes. Required for the recruitment of histone H3.3:H4 dimers to PML-nuclear bodies (PML-NBs); the process is independent of ATRX and facilitated by ASF1A; PML-NBs are suggested to function as regulatory sites for the incorporation of newly synthesized histone H3.3 into chromatin. Proposed to mediate activation of the JNK pathway and apoptosis via MAP3K5 in response to signaling from TNFRSF6 and TGFBR2. Interaction with HSPB1/HSP27 may prevent interaction with TNFRSF6 and MAP3K5 and block DAXX-mediated apoptosis. In contrast, in lymphoid cells JNC activation and TNFRSF6-mediated apoptosis may not involve DAXX. Plays a role as a positive regulator of the heat shock transcription factor HSF1 activity during the stress protein response. The protein is Death domain-associated protein 6 (DAXX) of Canis lupus familiaris (Dog).